The primary structure comprises 135 residues: uncharacterized protein (135 aa).

An HTH merR-type domain is found at 2–71 (TYTTAKAAEK…LKDIKRFAEC (70 aa)). The segment at residues 5-24 (TAKAAEKIGISAYTLRFYDK) is a DNA-binding region (H-T-H motif).

This is an uncharacterized protein from Haemophilus influenzae (strain ATCC 51907 / DSM 11121 / KW20 / Rd).